Here is a 157-residue protein sequence, read N- to C-terminus: Protein-export protein SecB (157 aa).

Belongs to the SecB family. Homotetramer, a dimer of dimers. One homotetramer interacts with 1 SecA dimer.

The protein localises to the cytoplasm. Functionally, one of the proteins required for the normal export of preproteins out of the cell cytoplasm. It is a molecular chaperone that binds to a subset of precursor proteins, maintaining them in a translocation-competent state. It also specifically binds to its receptor SecA. This is Protein-export protein SecB from Dichelobacter nodosus (strain VCS1703A).